A 359-amino-acid chain; its full sequence is Phospho-N-acetylmuramoyl-pentapeptide-transferase (359 aa).

A run of 10 helical transmembrane segments spans residues 3 to 23 (QILIAVAVAVTVSILLTPVLI), 55 to 75 (VAILAGIWAGYLGAHLAGLAF), 80 to 100 (IGASGLLVLGLATALGGVGFI), 117 to 137 (TAKTVGQITSAVLFGVLVLQF), 156 to 176 (IATVTLAPVLFVLFCVVIVSA), 187 to 207 (LDGLAAGTMAMVTAAYVLITF), 231 to 251 (LALIAAATAGACIGFLWWNAA), 255 to 275 (IFMGDTGSLALGGVIAGLSVT), 280 to 300 (ILAVVLGALFVAEITSVVLQI), and 334 to 354 (FWLLTAITCGLGVALFYGEWL).

Belongs to the glycosyltransferase 4 family. MraY subfamily. The cofactor is Mg(2+).

Its subcellular location is the cell membrane. The enzyme catalyses UDP-N-acetyl-alpha-D-muramoyl-L-alanyl-gamma-D-glutamyl-meso-2,6-diaminopimeloyl-D-alanyl-D-alanine + di-trans,octa-cis-undecaprenyl phosphate = di-trans,octa-cis-undecaprenyl diphospho-N-acetyl-alpha-D-muramoyl-L-alanyl-D-glutamyl-meso-2,6-diaminopimeloyl-D-alanyl-D-alanine + UMP. Its pathway is cell wall biogenesis; peptidoglycan biosynthesis. In terms of biological role, catalyzes the initial step of the lipid cycle reactions in the biosynthesis of the cell wall peptidoglycan: transfers peptidoglycan precursor phospho-MurNAc-pentapeptide from UDP-MurNAc-pentapeptide onto the lipid carrier undecaprenyl phosphate, yielding undecaprenyl-pyrophosphoryl-MurNAc-pentapeptide, known as lipid I. The polypeptide is Phospho-N-acetylmuramoyl-pentapeptide-transferase (Mycobacterium tuberculosis (strain ATCC 25177 / H37Ra)).